Reading from the N-terminus, the 106-residue chain is Gibberellin-regulated protein 4 (106 aa).

The signal sequence occupies residues 1–25 (MAKSYGAIFLLTLIVLFMLQTMVMA).

Belongs to the GASA family. In terms of processing, six disulfide bonds may be present. As to expression, expressed in flower buds, style, stamen filaments, vasculature of petals, root phloem, vasculature of cotyledons and rosette leaves and developing embryo.

It is found in the secreted. In terms of biological role, gibberellin-regulated protein involved in the regulation of floral meristem and floral organ identity, and promotion of seed size and weight. May play a role in the promotion of gibberellin responses such as regulation of flowering under short-day conditions, seed germination and inhibition of gibberellin oxidase. Possesses redox activity in E.coli and may function in redox regulation in planta. The protein is Gibberellin-regulated protein 4 (GASA4) of Arabidopsis thaliana (Mouse-ear cress).